Here is a 652-residue protein sequence, read N- to C-terminus: Trypanothione synthetase (652 aa).

The 141-residue stretch at 34-174 folds into the Peptidase C51 domain; that stretch reads SNKHDHFFSG…QHKDGVWTII (141 aa). 328–330 serves as a coordination point for ATP; it reads RFD. Mg(2+) is bound by residues D330, E344, and N346. ATP-binding positions include K513, K548, G555, Q583, and 618-620; that span reads IIT.

In the C-terminal section; belongs to the glutathionylspermidine synthase preATP-grasp family. The cofactor is Mg(2+). Post-translationally, the N-terminus is blocked.

The enzyme catalyses spermidine + glutathione + ATP = glutathionylspermidine + ADP + phosphate + H(+). It carries out the reaction glutathionylspermidine + glutathione + ATP = trypanothione + ADP + phosphate + H(+). Conjugates glutathione (gamma-Glu-Cys-Gly) and glutathionylspermidine to form trypanothione (N(1),N(8)-bis(glutathionyl)spermidine), which is involved in maintaining intracellular thiol redox and in defense against oxidants. This is Trypanothione synthetase (TRS) from Crithidia fasciculata.